A 518-amino-acid polypeptide reads, in one-letter code: Glutamate--cysteine ligase (518 aa).

Belongs to the glutamate--cysteine ligase type 1 family. Type 1 subfamily.

It carries out the reaction L-cysteine + L-glutamate + ATP = gamma-L-glutamyl-L-cysteine + ADP + phosphate + H(+). Its pathway is sulfur metabolism; glutathione biosynthesis; glutathione from L-cysteine and L-glutamate: step 1/2. The chain is Glutamate--cysteine ligase from Escherichia coli O127:H6 (strain E2348/69 / EPEC).